A 354-amino-acid polypeptide reads, in one-letter code: Probable L-ascorbate-6-phosphate lactonase UlaG (354 aa).

The protein belongs to the UlaG family. The cofactor is a divalent metal cation.

It is found in the cytoplasm. The enzyme catalyses L-ascorbate 6-phosphate + H2O = 3-dehydro-L-gulonate 6-phosphate. The protein operates within cofactor degradation; L-ascorbate degradation; D-xylulose 5-phosphate from L-ascorbate: step 1/4. Functionally, probably catalyzes the hydrolysis of L-ascorbate-6-P into 3-keto-L-gulonate-6-P. Is essential for L-ascorbate utilization under anaerobic conditions. In Salmonella gallinarum (strain 287/91 / NCTC 13346), this protein is Probable L-ascorbate-6-phosphate lactonase UlaG.